The sequence spans 216 residues: uncharacterized protein (216 aa).

Residues methionine 1–phenylalanine 21 form a helical membrane-spanning segment.

The protein resides in the membrane. This is an uncharacterized protein from Saccharomyces cerevisiae (strain ATCC 204508 / S288c) (Baker's yeast).